Reading from the N-terminus, the 132-residue chain is uncharacterized protein (132 aa).

An N-terminal signal peptide occupies residues 1-35; it reads MSFEYRHYKREAKICTCRGGWAHVLLCIGVSQGAC. A disordered region spans residues 91 to 132; sequence AHPGSHSDQPPGVPSRRKSRLERWSPSVSRSTSPPTEAPFCL. Residues 115-125 are compositionally biased toward low complexity; it reads SPSVSRSTSPP.

Its subcellular location is the secreted. This is an uncharacterized protein from Homo sapiens (Human).